We begin with the raw amino-acid sequence, 249 residues long: Isoamyl acetate-hydrolyzing esterase 1 homolog (249 aa).

Ser24 functions as the Nucleophile in the catalytic mechanism. Lys63 carries the post-translational modification N6-succinyllysine. Catalysis depends on Asp197, which acts as the Proton donor. Catalysis depends on His200, which acts as the Proton acceptor.

The protein belongs to the 'GDSL' lipolytic enzyme family. IAH1 subfamily.

Functionally, probable lipase. This chain is Isoamyl acetate-hydrolyzing esterase 1 homolog (IAH1), found in Bos taurus (Bovine).